A 369-amino-acid polypeptide reads, in one-letter code: Chorismate synthase (369 aa).

The NADP(+) site is built by arginine 48 and arginine 54. FMN is bound by residues 125–127 (RSS), 238–239 (NA), glycine 278, 293–297 (KPTSS), and arginine 319.

This sequence belongs to the chorismate synthase family. As to quaternary structure, homotetramer. FMNH2 serves as cofactor.

The catalysed reaction is 5-O-(1-carboxyvinyl)-3-phosphoshikimate = chorismate + phosphate. The protein operates within metabolic intermediate biosynthesis; chorismate biosynthesis; chorismate from D-erythrose 4-phosphate and phosphoenolpyruvate: step 7/7. Catalyzes the anti-1,4-elimination of the C-3 phosphate and the C-6 proR hydrogen from 5-enolpyruvylshikimate-3-phosphate (EPSP) to yield chorismate, which is the branch point compound that serves as the starting substrate for the three terminal pathways of aromatic amino acid biosynthesis. This reaction introduces a second double bond into the aromatic ring system. This is Chorismate synthase from Burkholderia mallei (strain NCTC 10229).